Reading from the N-terminus, the 255-residue chain is Small ribosomal subunit protein eS1 (255 aa).

At Ala2 the chain carries N-acetylalanine; partial.

The protein belongs to the eukaryotic ribosomal protein eS1 family. As to quaternary structure, component of the small ribosomal subunit. Mature ribosomes consist of a small (40S) and a large (60S) subunit. The 40S subunit contains about 33 different proteins and 1 molecule of RNA (18S). The 60S subunit contains about 49 different proteins and 3 molecules of RNA (25S, 5.8S and 5S).

Its subcellular location is the cytoplasm. The sequence is that of Small ribosomal subunit protein eS1 (rps1) from Pyrenophora tritici-repentis (strain Pt-1C-BFP) (Wheat tan spot fungus).